A 553-amino-acid polypeptide reads, in one-letter code: CTP synthase (553 aa).

The interval 1-266 (MTKNYIFITG…DNYICEYFKL (266 aa)) is amidoligase domain. Ser-14 is a binding site for CTP. Residue Ser-14 participates in UTP binding. ATP-binding positions include 15 to 20 (SLGKGI) and Asp-72. Mg(2+)-binding residues include Asp-72 and Glu-140. Residues 147 to 149 (DIE), 187 to 192 (KTKPTQ), and Lys-223 each bind CTP. UTP-binding positions include 187-192 (KTKPTQ) and Lys-223. 239–241 (KDV) is an ATP binding site. The region spanning 291–544 (IIGIIGKYIK…IKSAKKNKKN (254 aa)) is the Glutamine amidotransferase type-1 domain. Gly-352 is an L-glutamine binding site. Catalysis depends on Cys-379, which acts as the Nucleophile; for glutamine hydrolysis. Residues 380 to 383 (LGMQ), Glu-403, and Arg-472 contribute to the L-glutamine site. Residues His-517 and Glu-519 contribute to the active site.

This sequence belongs to the CTP synthase family. In terms of assembly, homotetramer.

The catalysed reaction is UTP + L-glutamine + ATP + H2O = CTP + L-glutamate + ADP + phosphate + 2 H(+). The enzyme catalyses L-glutamine + H2O = L-glutamate + NH4(+). It carries out the reaction UTP + NH4(+) + ATP = CTP + ADP + phosphate + 2 H(+). It functions in the pathway pyrimidine metabolism; CTP biosynthesis via de novo pathway; CTP from UDP: step 2/2. With respect to regulation, allosterically activated by GTP, when glutamine is the substrate; GTP has no effect on the reaction when ammonia is the substrate. The allosteric effector GTP functions by stabilizing the protein conformation that binds the tetrahedral intermediate(s) formed during glutamine hydrolysis. Inhibited by the product CTP, via allosteric rather than competitive inhibition. Catalyzes the ATP-dependent amination of UTP to CTP with either L-glutamine or ammonia as the source of nitrogen. Regulates intracellular CTP levels through interactions with the four ribonucleotide triphosphates. The polypeptide is CTP synthase (Buchnera aphidicola subsp. Schizaphis graminum (strain Sg)).